A 947-amino-acid polypeptide reads, in one-letter code: Zinc finger protein 268 (947 aa).

In terms of domain architecture, KRAB spans 81–152 (LSFMDVFVDF…QAQVPNQTCP (72 aa)). S178 is subject to Phosphoserine; by TBK1. 24 consecutive C2H2-type zinc fingers follow at residues 276–298 (FGCS…QQTH), 304–326 (YGCN…QRIH), 332–354 (HECS…QRIH), 360–382 (YECC…QKTH), 388–410 (YVCN…ERIH), 416–438 (YECN…QRTH), 444–466 (YVCS…QGIH), 472–494 (YGCI…QRSH), 500–522 (YVCN…TRTH), 528–550 (HECN…QRIH), 556–578 (YECH…QRTH), 584–606 (YECT…QRTH), 612–634 (FECS…QRTH), 640–662 (YSCN…KGVH), 668–690 (YGCS…QRSH), 696–718 (YGCS…MRTH), 724–746 (HECR…QRIH), 752–774 (YECS…QRTH), 780–802 (YGCS…MRTH), 808–830 (YECN…ERTH), 836–858 (YKCS…QRMH), 864–886 (YECS…QRTH), 892–914 (YGCN…QRTH), and 920–942 (CKCT…QRTH).

It belongs to the krueppel C2H2-type zinc-finger protein family. As to quaternary structure, interacts (via the KRAB domain) with TRIM28 (via the RBCC domain); the interaction increases ZNF268 nuclear localization activity. Isoform 2 interacts with CHUK and IKBKB; the interaction is further increased in a TNF-alpha-dependent manner. Interacts with TOLLIP; this interaction is impaired by ZNF268 phosphorylation at Ser-178. Forms a ternary complex with TBK1 and SETD4; the interaction between SETD4 and TBK1 is ZNF268-dependent and leads to TBK1 monomethylation. In terms of processing, phosphorylation at Ser-178 stabilizes the protein by interfering with its binding to TOLLIP, hence impairing its degradation by Tollip-mediated selective autophagy system. Overexpressed in ovarian cancer tissues compared to normal ovarian tissues. Isoform 1 and isoform 2 are expressed in squamous epithelium tissues. Isoform 2 is overexpressed in squamous cervical cancer (at protein level). Expressed in blood cells. Isoform 1 is expressed in pancreas, lung, skeletal muscle, heart, placenta, liver, kidney and brain. Isoform 2 expressed in chronic lymphocytic leukemia (CLL) and several tumor cell lines. Isoform 3 is expressed in several tumor cells. Isoform 5 is expressed in fetal liver and several tumor cells. Isoform 6 is weakly expressed in brain, lung amd small intestin and in several tumor cells. Isoform 7 is expressed in fetal liver and several tumor cells.

The protein localises to the nucleus. The protein resides in the cytoplasm. Its function is as follows. Acts as a transcriptional repressor. Inhibits erythroid differentiation and tumor cell proliferation. Plays a role during ovarian cancer development and progression. In terms of biological role, contributes to cervical carcinogenesis in part through the TNF-alpha-induced NF-kappa-B signaling pathway by interacting with the I-kappa-B-kinase (IKK) core complex. Involved in the regulation of antiviral interferon signaling. During viral infection, recruits SETD4 to TBK1, leading to TBK1 monomethylation, which is critical for the assembly of TBK1 complex and IRF3 signaling. The polypeptide is Zinc finger protein 268 (ZNF268) (Homo sapiens (Human)).